Reading from the N-terminus, the 361-residue chain is Peptide chain release factor 1 (361 aa).

N5-methylglutamine is present on Gln-237.

The protein belongs to the prokaryotic/mitochondrial release factor family. In terms of processing, methylated by PrmC. Methylation increases the termination efficiency of RF1.

The protein localises to the cytoplasm. In terms of biological role, peptide chain release factor 1 directs the termination of translation in response to the peptide chain termination codons UAG and UAA. This is Peptide chain release factor 1 from Alcanivorax borkumensis (strain ATCC 700651 / DSM 11573 / NCIMB 13689 / SK2).